The following is a 396-amino-acid chain: Stearoyl-[acyl-carrier-protein] 9-desaturase, chloroplastic (396 aa).

The transit peptide at 1-32 (MALKLNPVTTFPSTRSLNNFSSRSPRTFLMAA) directs the protein to the chloroplast. 6 residues coordinate Fe cation: Glu138, Glu176, His179, Glu229, Glu262, and His265.

The protein belongs to the fatty acid desaturase type 2 family. In terms of assembly, homodimer. Fe(2+) serves as cofactor.

The protein resides in the plastid. The protein localises to the chloroplast. The enzyme catalyses octadecanoyl-[ACP] + 2 reduced [2Fe-2S]-[ferredoxin] + O2 + 2 H(+) = (9Z)-octadecenoyl-[ACP] + 2 oxidized [2Fe-2S]-[ferredoxin] + 2 H2O. It functions in the pathway lipid metabolism; fatty acid metabolism. Its function is as follows. Converts stearoyl-ACP to oleoyl-ACP by introduction of a cis double bond between carbons 9 and 10 of the acyl chain. This Linum usitatissimum (Flax) protein is Stearoyl-[acyl-carrier-protein] 9-desaturase, chloroplastic.